The following is a 250-amino-acid chain: 2,3-bisphosphoglycerate-dependent phosphoglycerate mutase (250 aa).

Substrate contacts are provided by residues 10–17 (RHGESQWN), 23–24 (TG), R62, 89–92 (ERHY), K100, 116–117 (RR), and 185–186 (GN). H11 functions as the Tele-phosphohistidine intermediate in the catalytic mechanism. E89 acts as the Proton donor/acceptor in catalysis.

This sequence belongs to the phosphoglycerate mutase family. BPG-dependent PGAM subfamily. In terms of assembly, homodimer.

The catalysed reaction is (2R)-2-phosphoglycerate = (2R)-3-phosphoglycerate. It functions in the pathway carbohydrate degradation; glycolysis; pyruvate from D-glyceraldehyde 3-phosphate: step 3/5. Functionally, catalyzes the interconversion of 2-phosphoglycerate and 3-phosphoglycerate. The polypeptide is 2,3-bisphosphoglycerate-dependent phosphoglycerate mutase (Cronobacter sakazakii (strain ATCC BAA-894) (Enterobacter sakazakii)).